A 201-amino-acid chain; its full sequence is Testis-expressed protein 38 (201 aa).

The chain crosses the membrane as a helical span at residues Ile-3–Phe-23.

Its subcellular location is the membrane. This is Testis-expressed protein 38 (Tex38) from Mus musculus (Mouse).